A 220-amino-acid polypeptide reads, in one-letter code: MAYRDQPLGELALSIPRASALFRKYNMDYCCGGKQTLARAAARKELDVEVIEAELAKLAEQPIEKDWRSAPLAEIIDHIIVRYHDRHREQLPELILQATKVERVHADKPSVPKGLTKYLTMLHEELSSHMMKEEQILFPMIKQGMGSQAMGPISVMESEHDEAGELLEVIKHTTNNVTPPPEACTTWKAMYNGINELIDDLMDHISLENNVLFPRALAGE.

Belongs to the RIC family. YtfE subfamily. As to quaternary structure, homodimer.

It localises to the cytoplasm. Functionally, di-iron-containing protein involved in the repair of iron-sulfur clusters damaged by oxidative and nitrosative stress conditions. This Shigella boydii serotype 4 (strain Sb227) protein is Iron-sulfur cluster repair protein YtfE.